The chain runs to 199 residues: Recombination protein RecR (199 aa).

The C4-type zinc-finger motif lies at 57–72 (CQSCRTYTEESLCPIC). The 96-residue stretch at 81–176 (STICVVETPA…VISRIAHGVP (96 aa)) folds into the Toprim domain.

The protein belongs to the RecR family.

Functionally, may play a role in DNA repair. It seems to be involved in an RecBC-independent recombinational process of DNA repair. It may act with RecF and RecO. In Shewanella sp. (strain MR-4), this protein is Recombination protein RecR.